We begin with the raw amino-acid sequence, 497 residues long: Ankyrin repeat domain-containing protein 53 (497 aa).

Residues 1 to 10 (MRRPSRRRSK) show a composition bias toward basic residues. Residues 1 to 65 (MRRPSRRRSK…VSSPNSESSQ (65 aa)) form a disordered region. The segment covering 12-27 (STPPRSHTTPRRTGPS) has biased composition (low complexity). The span at 28-39 (DSRRRPGTKEQP) shows a compositional bias: basic and acidic residues. ANK repeat units follow at residues 110 to 140 (KGFT…PVDL), 144 to 177 (KGQT…AINS), and 181 to 210 (NGST…NVHA). A coiled-coil region spans residues 239 to 264 (WKHDKKVLAQEMEKLRTLKEKLTILE).

In terms of assembly, interacts with PSRC1; recruited by PSRC1 to the spindle during mitosis. Phosphorylated during mitosis.

The protein resides in the cytoplasm. Its subcellular location is the cytoskeleton. It is found in the spindle. The protein localises to the spindle pole. Required for normal progression through mitosis. Involved in chromosome alignment and cytokinesis via regulation of microtubules polymerization. The chain is Ankyrin repeat domain-containing protein 53 (Ankrd53) from Mus musculus (Mouse).